We begin with the raw amino-acid sequence, 207 residues long: Protein-L-isoaspartate O-methyltransferase (207 aa).

The active site involves serine 56.

Belongs to the methyltransferase superfamily. L-isoaspartyl/D-aspartyl protein methyltransferase family.

It localises to the cytoplasm. The enzyme catalyses [protein]-L-isoaspartate + S-adenosyl-L-methionine = [protein]-L-isoaspartate alpha-methyl ester + S-adenosyl-L-homocysteine. Functionally, catalyzes the methyl esterification of L-isoaspartyl residues in peptides and proteins that result from spontaneous decomposition of normal L-aspartyl and L-asparaginyl residues. It plays a role in the repair and/or degradation of damaged proteins. The polypeptide is Protein-L-isoaspartate O-methyltransferase (Pyrobaculum neutrophilum (strain DSM 2338 / JCM 9278 / NBRC 100436 / V24Sta) (Thermoproteus neutrophilus)).